The following is a 176-amino-acid chain: ATP-dependent protease subunit HslV (176 aa).

Residue threonine 4 is part of the active site. The Na(+) site is built by glycine 158, cysteine 161, and threonine 164.

Belongs to the peptidase T1B family. HslV subfamily. In terms of assembly, a double ring-shaped homohexamer of HslV is capped on each side by a ring-shaped HslU homohexamer. The assembly of the HslU/HslV complex is dependent on binding of ATP.

Its subcellular location is the cytoplasm. The catalysed reaction is ATP-dependent cleavage of peptide bonds with broad specificity.. Allosterically activated by HslU binding. Functionally, protease subunit of a proteasome-like degradation complex believed to be a general protein degrading machinery. This chain is ATP-dependent protease subunit HslV, found in Rhizobium meliloti (strain 1021) (Ensifer meliloti).